Here is a 128-residue protein sequence, read N- to C-terminus: Calcitonin gene-related peptide 1 (128 aa).

An N-terminal signal peptide occupies residues 1-25 (MGFQKFSPFLALSILVLLQAGSLHA). Residues 26–80 (APFRSALESSPADPATLSEDEARLLLAALVQDYVQMKASELEQEQEREGSRIIAQ) constitute a propeptide that is removed on maturation. Cys-84 and Cys-89 form a disulfide bridge. Residue Phe-119 is modified to Phenylalanine amide. The propeptide occupies 125–128 (DLQA).

It belongs to the calcitonin family. Expressed in spinal cord.

The protein localises to the secreted. Functionally, CGRP1/CALCA is a peptide hormone that induces vasodilation mediated by the CALCRL-RAMP1 receptor complex. Dilates a variety of vessels including the coronary, cerebral and systemic vasculature. Its abundance in the CNS also points toward a neurotransmitter or neuromodulator role. It also elevates platelet cAMP. CGRP1 can also bind and activate CALCR-RAMP1 (AMYR1) receptor complex. This chain is Calcitonin gene-related peptide 1, found in Homo sapiens (Human).